Here is a 178-residue protein sequence, read N- to C-terminus: Large ribosomal subunit protein uL6 (178 aa).

This sequence belongs to the universal ribosomal protein uL6 family. Part of the 50S ribosomal subunit.

In terms of biological role, this protein binds to the 23S rRNA, and is important in its secondary structure. It is located near the subunit interface in the base of the L7/L12 stalk, and near the tRNA binding site of the peptidyltransferase center. The polypeptide is Large ribosomal subunit protein uL6 (Streptococcus pneumoniae serotype 4 (strain ATCC BAA-334 / TIGR4)).